The following is a 473-amino-acid chain: MNWEMVIGLEVHIQLSTKSKLFSTSATKYGQHQNTQAAFLDLGLPGTLPVVNKEAIRKAVIFGLAVDAKISKDSFFARKNYFYPDLPKGYQISQSTNPIVQEGRLDIETSKGLKTIRIERAHLEEDAGKSVHGYIAGETGLDYNRAGTPLLEIVTYPDFRSAEEVVAYLKKLHQLVKHLGICDGNMQEGSFRCDVNLSIRPQGQAKFGTRAELKNINSFRFIDKAIEYEYARQVSVLESGGEVVQETRLYDADANETRSMRAKEDAFDYRYFPDPDLLPLVITDEYIESIKKQMPLKPEEREAVYREHLAEQEVEFLLSNLEIADYYDKVAVVIGYKPAYNWVTVDLISTLNRAEKEFSSDVVPAEILLEIIANVQKDIISQANAKKVIAEYIDAPSAIEAIIEKLGLKQVSDEGMIRELVQGIIAANPQQAADFKAGKTKLMSFFVGQAMKASKGKANPKQVNQIVQEELNK.

It belongs to the GatB/GatE family. GatB subfamily. Heterotrimer of A, B and C subunits.

The catalysed reaction is L-glutamyl-tRNA(Gln) + L-glutamine + ATP + H2O = L-glutaminyl-tRNA(Gln) + L-glutamate + ADP + phosphate + H(+). The enzyme catalyses L-aspartyl-tRNA(Asn) + L-glutamine + ATP + H2O = L-asparaginyl-tRNA(Asn) + L-glutamate + ADP + phosphate + 2 H(+). Functionally, allows the formation of correctly charged Asn-tRNA(Asn) or Gln-tRNA(Gln) through the transamidation of misacylated Asp-tRNA(Asn) or Glu-tRNA(Gln) in organisms which lack either or both of asparaginyl-tRNA or glutaminyl-tRNA synthetases. The reaction takes place in the presence of glutamine and ATP through an activated phospho-Asp-tRNA(Asn) or phospho-Glu-tRNA(Gln). This chain is Aspartyl/glutamyl-tRNA(Asn/Gln) amidotransferase subunit B, found in Francisella tularensis subsp. novicida (strain U112).